The chain runs to 587 residues: Proteasome-associated ATPase (587 aa).

The stretch at 1-94 forms a coiled coil; that stretch reads MAARDDAEAR…KEEVDRLAQP (94 aa). 276–281 is a binding site for ATP; that stretch reads GCGKTL. The tract at residues 586–587 is docks into pockets in the proteasome alpha-ring; sequence YL.

The protein belongs to the AAA ATPase family. Homohexamer. Assembles into a hexameric ring structure that caps the 20S proteasome core. Strongly interacts with the prokaryotic ubiquitin-like protein Pup through a hydrophobic interface; the interacting region of ARC lies in its N-terminal coiled-coil domain. There is one Pup binding site per ARC hexamer ring. Upon ATP-binding, the C-terminus of ARC interacts with the alpha-rings of the proteasome core, possibly by binding to the intersubunit pockets.

It functions in the pathway protein degradation; proteasomal Pup-dependent pathway. ATPase which is responsible for recognizing, binding, unfolding and translocation of pupylated proteins into the bacterial 20S proteasome core particle. May be essential for opening the gate of the 20S proteasome via an interaction with its C-terminus, thereby allowing substrate entry and access to the site of proteolysis. Thus, the C-termini of the proteasomal ATPase may function like a 'key in a lock' to induce gate opening and therefore regulate proteolysis. The polypeptide is Proteasome-associated ATPase (Streptosporangium roseum (strain ATCC 12428 / DSM 43021 / JCM 3005 / KCTC 9067 / NCIMB 10171 / NRRL 2505 / NI 9100)).